Reading from the N-terminus, the 407-residue chain is Semenogelin-2 (407 aa).

The signal sequence occupies residues 1 to 23; the sequence is MKSIILFVLSLVLILEKQAAVMG. Disordered stretches follow at residues 25–60, 133–158, 173–192, and 272–407; these read KDGS…TKSK, GQAH…LSSQ, KEQA…GSQS, and NLNQ…NKIS. 3 stretches are compositionally biased toward polar residues: residues 31-40, 137-158, and 174-192; these read QLPSGSSQFP, CGTQ…LSSQ, and EQAS…GSQS. Positions 292-310 are enriched in basic and acidic residues; the sequence is RTEERQLNHGEKSVQKDVS. Residues 325–334 are compositionally biased toward polar residues; it reads KSQNQVTIHS. Residues 335–345 are compositionally biased toward basic and acidic residues; sequence QDQEHGHKENK. Polar residues predominate over residues 372-397; it reads GSISIQTEEQIHGKSQNXVRIPSQAQ.

It belongs to the semenogelin family. In terms of assembly, interacts with SERPINA5.

The protein resides in the secreted. Participates in the formation of a gel matrix (sperm coagulum) entrapping the accessory gland secretions and ejaculated spermatozoa. The sequence is that of Semenogelin-2 (SEMG2) from Pan troglodytes (Chimpanzee).